The chain runs to 200 residues: Recombination protein RecR (200 aa).

A C4-type zinc finger spans residues 57–72; that stretch reads CRLCRTLTEEELCPQC. The region spanning 80-175 is the Toprim domain; sequence TLLCVVEGPT…VASRIAHGVP (96 aa).

Belongs to the RecR family.

Its function is as follows. May play a role in DNA repair. It seems to be involved in an RecBC-independent recombinational process of DNA repair. It may act with RecF and RecO. This chain is Recombination protein RecR, found in Pseudomonas syringae pv. tomato (strain ATCC BAA-871 / DC3000).